The sequence spans 458 residues: RuvB-like helicase 1 (458 aa).

71–78 (GGPGTGKT) serves as a coordination point for ATP.

This sequence belongs to the RuvB family. In terms of assembly, may form heterododecamers with hel-2/rvb2. Component of the SWR1 chromatin remodeling complex, the INO80 chromatin remodeling complex, and of the R2TP complex.

It localises to the nucleus. The enzyme catalyses ATP + H2O = ADP + phosphate + H(+). Its function is as follows. DNA helicase which participates in several chromatin remodeling complexes, including the SWR1 and the INO80 complexes. The SWR1 complex mediates the ATP-dependent exchange of histone H2A for the H2A variant H2A.Z leading to transcriptional regulation of selected genes by chromatin remodeling. The INO80 complex remodels chromatin by shifting nucleosomes and is involved in DNA repair. Also involved in pre-rRNA processing. The chain is RuvB-like helicase 1 (hel-1) from Neurospora crassa (strain ATCC 24698 / 74-OR23-1A / CBS 708.71 / DSM 1257 / FGSC 987).